A 579-amino-acid polypeptide reads, in one-letter code: Sulfite reductase [NADPH] hemoprotein beta-component (579 aa).

[4Fe-4S] cluster is bound by residues C434, C440, C479, and C483. C483 contacts siroheme.

This sequence belongs to the nitrite and sulfite reductase 4Fe-4S domain family. In terms of assembly, alpha(8)-beta(8). The alpha component is a flavoprotein, the beta component is a hemoprotein. Requires siroheme as cofactor. [4Fe-4S] cluster is required as a cofactor.

The enzyme catalyses hydrogen sulfide + 3 NADP(+) + 3 H2O = sulfite + 3 NADPH + 4 H(+). It functions in the pathway sulfur metabolism; hydrogen sulfide biosynthesis; hydrogen sulfide from sulfite (NADPH route): step 1/1. Its function is as follows. Component of the sulfite reductase complex that catalyzes the 6-electron reduction of sulfite to sulfide. This is one of several activities required for the biosynthesis of L-cysteine from sulfate. This Salmonella choleraesuis (strain SC-B67) protein is Sulfite reductase [NADPH] hemoprotein beta-component.